Reading from the N-terminus, the 403-residue chain is Exodeoxyribonuclease 7 large subunit (403 aa).

Belongs to the XseA family. As to quaternary structure, heterooligomer composed of large and small subunits.

Its subcellular location is the cytoplasm. It carries out the reaction Exonucleolytic cleavage in either 5'- to 3'- or 3'- to 5'-direction to yield nucleoside 5'-phosphates.. Functionally, bidirectionally degrades single-stranded DNA into large acid-insoluble oligonucleotides, which are then degraded further into small acid-soluble oligonucleotides. The sequence is that of Exodeoxyribonuclease 7 large subunit from Clostridium botulinum (strain Okra / Type B1).